Here is a 660-residue protein sequence, read N- to C-terminus: Squalene--hopene cyclase (660 aa).

One copy of the PFTB 1 repeat lies at 73–114 (EAKIGNYLRRVQGAHGGWPLVHDGEFDMSASVKAYFALKMIG). Residue Asp-394 is the Proton donor of the active site. PFTB repeat units follow at residues 419–460 (IDRG…GALL) and 536–586 (IRKA…ALMA).

Belongs to the terpene cyclase/mutase family.

It localises to the cell membrane. The enzyme catalyses squalene = hop-22(29)-ene. It catalyses the reaction squalene + H2O = hopan-22-ol. The protein operates within secondary metabolite biosynthesis; hopanoid biosynthesis. Its function is as follows. Catalyzes the cyclization of squalene into hopene. This Bradyrhizobium diazoefficiens (strain JCM 10833 / BCRC 13528 / IAM 13628 / NBRC 14792 / USDA 110) protein is Squalene--hopene cyclase (shc).